A 597-amino-acid chain; its full sequence is Probable bifunctional ADP-ribose hydrolase/ADP-ribosyltransferase (597 aa).

One can recognise a Macro domain in the interval 99–299 (SRLIKHGDLG…FYSKLLGPSH (201 aa)). ADP-D-ribose-binding residues include Asp118, Ile119, and Asn133. 3 residues coordinate Zn(2+): Cys139, His144, and Cys146. Residues Cys146, Ile147, Asp148, Ser244, Thr245, Gly246, and Phe248 each contribute to the ADP-D-ribose site. The Deacetylase sirtuin-type domain maps to 307–597 (ENTPQGSLSL…IGRAIPLLLE (291 aa)). Residues Ala333, 418 to 421 (SNAD), and Gln438 contribute to the NAD(+) site. Zn(2+)-binding residues include Cys446, Cys450, Cys485, and Cys488. Val584 is a binding site for NAD(+).

It in the N-terminal section; belongs to the MacroD-type family. Zn-Macro subfamily. In the C-terminal section; belongs to the sirtuin family. Class M subfamily. Monomer. The cofactor is Zn(2+).

The catalysed reaction is 5-O-(ADP-D-ribosyl)-L-glutamyl-[protein] + H2O = L-glutamyl-[protein] + ADP-D-ribose + H(+). Its function is as follows. Is probably a bifunctional enzyme with ADP-ribosyltransferase and ADP-ribosylhydrolase activities. In vitro, can act as an ADP-ribosylhydrolase that hydrolyzes ADP-ribosyl-glutamate bonds. It can remove the ADP-ribosyl modification from the human mono-ADP-ribosylated PARP1 E988Q mutant, which is primarily modified on glutamate site with only minor aspartate contribution. It cannot hydrolyze the ADP-ribosyl-arpartate bond in ribosylated S.pyogenes GcvH-L. The polypeptide is Probable bifunctional ADP-ribose hydrolase/ADP-ribosyltransferase (Fusarium oxysporum f. sp. cubense).